We begin with the raw amino-acid sequence, 175 residues long: Microfibril-associated glycoprotein 3 (175 aa).

Residues 1–175 (FRTEGAEKLQ…KDGSFESCQL (175 aa)) lie on the Cytoplasmic side of the membrane. A disordered region spans residues 85–175 (KERPALNAQD…KDGSFESCQL (91 aa)). Over residues 145 to 175 (QDSSHFSPPDDTGSTESNSNYKDGSFESCQL) the composition is skewed to polar residues.

Glycosylated.

Its subcellular location is the cell membrane. Functionally, component of the elastin-associated microfibrils. The sequence is that of Microfibril-associated glycoprotein 3 (MFAP3) from Bos taurus (Bovine).